A 185-amino-acid chain; its full sequence is Inner membrane-spanning protein YciB (185 aa).

Transmembrane regions (helical) follow at residues 27-47, 53-73, 76-96, 118-138, and 149-169; these read IVLVVATILQIVILKWKYGIV, IMASAVVFFGLLTAYFNEIRY, WKVTIINGLFAIVLLVAQFQF, TLNLGWALFFIICMLVNIYIS, and FKSFGIIGMTVIATIISGVYI.

This sequence belongs to the YciB family.

Its subcellular location is the cell inner membrane. Plays a role in cell envelope biogenesis, maintenance of cell envelope integrity and membrane homeostasis. The polypeptide is Inner membrane-spanning protein YciB (Haemophilus influenzae (strain 86-028NP)).